A 419-amino-acid chain; its full sequence is UPF0242 protein TC_0906 (419 aa).

It belongs to the UPF0242 family.

The polypeptide is UPF0242 protein TC_0906 (Chlamydia muridarum (strain MoPn / Nigg)).